We begin with the raw amino-acid sequence, 183 residues long: Photosystem I assembly protein Ycf4 (183 aa).

2 consecutive transmembrane segments (helical) span residues 21 to 43 (YWWASVLLLGGSSFLVVGLSSRL) and 58 to 80 (FIPQGLVMCFYGLVGLVVSTYLW).

The protein belongs to the Ycf4 family.

It is found in the plastid. The protein localises to the chloroplast thylakoid membrane. Seems to be required for the assembly of the photosystem I complex. The chain is Photosystem I assembly protein Ycf4 from Nephroselmis olivacea (Green alga).